Reading from the N-terminus, the 212-residue chain is Glutathione S-transferase hmp2 (212 aa).

Positions 1 to 80 constitute a GST N-terminal domain; sequence MVIKLYGSAM…YLARKYDSGT (80 aa). Glutathione is bound by residues 51-52 and 64-65; these read KV and ES. The region spanning 88-212 is the GST C-terminal domain; that stretch reads DHEAYGRFEQ…TWIKATAEAR (125 aa).

The protein belongs to the GST superfamily.

It catalyses the reaction RX + glutathione = an S-substituted glutathione + a halide anion + H(+). It participates in secondary metabolite biosynthesis. Glutathione S-transferase; part of the gene cluster that mediates the biosynthesis of hypothemycin, a resorcylic acid lactone (RAL) that irreversibly inhibits a subset of protein kinases with a conserved cysteine in the ATP binding site such as human ERK2. The first step is performed by both PKSs hmp3 and hmp8 and leads to the production of 7',8'-dehydrozearalenol (DHZ). The highly reducing PKS hpm8 synthesizes the reduced hexaketide (7S,11S,2E,8E)-7,11-dihydroxy-dodeca-2,8-dienoate, which is transferred downstream to the non-reducing PKS hpm3. Hpm3 then extends the reduced hexaketide to a nonaketide, after which regioselective cyclization and macrolactonization affords DHZ. The next step is the conversion of DHZ into aigialomycin C and is performed by the O-methyltransferase hmp5, the FAD-binding monooxygenase hmp7, and the cytochrome P450 monooxygenase hmp1. The wide substrate tolerance of the hmp5 and hmp7 implies that the reactions from DHZ to aigialomycin C can occur in any order. The steps from aigialomycin C to hypothemycin are less well established. The FAD-linked oxidoreductase hmp9 presumably catalyzes oxidation of the C-6' hydroxyl to a ketone. The timing of this oxidation is important, since the resulting enone functional group is a Michael acceptor that can react spontaneously with glutathione, an abundant metabolite in fungal cells. The glutathione S-transferase hmp2 catalyzes cis-trans isomerization of the 7',8' double bond with equilibrium favoring the trans isomer. The hpm6-encoded transporter might preferentially pump hypothemycin out of the cell relative to the trans isomer aigialomycin A. The cis-to-trans isomerization may be coupled with C-4' hydroxylation, since all known hypothemycin analogs containing the enone functional group also have hydroxyl groups at both C-4' and C-5'. This is Glutathione S-transferase hmp2 from Hypomyces subiculosus (Nectria subiculosa).